The chain runs to 181 residues: ADP-ribosylation factor 1 (181 aa).

Residue glycine 2 is the site of N-myristoyl glycine attachment. Residues 24–31 (GLDAAGKT), 126–129 (NKQD), and alanine 160 each bind GTP.

Belongs to the small GTPase superfamily. Arf family. May interact with GTPase RAB5b.

It localises to the golgi apparatus membrane. It catalyses the reaction GTP + H2O = GDP + phosphate + H(+). With respect to regulation, alternates between an inactive GDP-bound form and an active GTP-bound form. Intrinsic GTPase activity is almost undetectable in vitro. Activated by a guanine nucleotide-exchange factor (GEF) and inactivated by GTPase-activating protein ARFGAP1. Functionally, small GTPase involved in protein trafficking between different compartments. Modulates vesicle budding and uncoating within the Golgi complex. In its GTP-bound form, triggers the recruitment of coatomer proteins to the Golgi membrane. The hydrolysis of ARF1-bound GTP, which is mediated by ARFGAPs proteins, is required for dissociation of coat proteins from Golgi membranes and vesicles. Regulates the transport of N-acylated AK2 to the parasitophorous vacuole membrane. May be involved in the activation of lipid kinase PIP5K. This chain is ADP-ribosylation factor 1 (ARF1), found in Plasmodium falciparum (isolate NF54).